A 296-amino-acid chain; its full sequence is Glycerol-3-phosphate dehydrogenase [NAD(P)+] (296 aa).

3 residues coordinate NADPH: W12, R31, and K80. Sn-glycerol 3-phosphate contacts are provided by K80, G108, and S110. A112 lines the NADPH pocket. The sn-glycerol 3-phosphate site is built by K162, D215, S225, R226, and N227. The active-site Proton acceptor is the K162. Residue R226 coordinates NADPH. NADPH-binding residues include V250 and E252.

It belongs to the NAD-dependent glycerol-3-phosphate dehydrogenase family.

It localises to the cytoplasm. It carries out the reaction sn-glycerol 3-phosphate + NAD(+) = dihydroxyacetone phosphate + NADH + H(+). The catalysed reaction is sn-glycerol 3-phosphate + NADP(+) = dihydroxyacetone phosphate + NADPH + H(+). It functions in the pathway membrane lipid metabolism; glycerophospholipid metabolism. Its function is as follows. Catalyzes the reduction of the glycolytic intermediate dihydroxyacetone phosphate (DHAP) to sn-glycerol 3-phosphate (G3P), the key precursor for phospholipid synthesis. The chain is Glycerol-3-phosphate dehydrogenase [NAD(P)+] from Sulfurimonas denitrificans (strain ATCC 33889 / DSM 1251) (Thiomicrospira denitrificans (strain ATCC 33889 / DSM 1251)).